Reading from the N-terminus, the 212-residue chain is Regulator of G-protein signaling 2 (212 aa).

Disordered stretches follow at residues 11–33 (HDCG…REKM) and 48–69 (FLQN…PQTF). Positions 32-66 (KMKRTLLKDWKTRLSYFLQNSSSPGKPKTGKKSKP) are necessary for membrane association. A necessary to inhibit protein synthesis region spans residues 79-116 (LWAEAFDELLASKYGLAAFRAFLKSEFCEENIEFWLAC). The region spanning 83 to 199 (AFDELLASKY…LESEFYQDLC (117 aa)) is the RGS domain.

Interacts with GNAQ. Does not interact with GNAI1 and GNAI3. Interacts with EIF2B5. Interacts with PRKG1 (isoform alpha). In terms of processing, phosphorylated by protein kinase C. Phosphorylation by PRKG1 leads to activation of RGS2 activity.

The protein localises to the cell membrane. It localises to the cytoplasm. Its subcellular location is the nucleus. It is found in the nucleolus. Regulates G protein-coupled receptor signaling cascades. Inhibits signal transduction by increasing the GTPase activity of G protein alpha subunits, thereby driving them into their inactive GDP-bound form. It is involved in the negative regulation of the angiotensin-activated signaling pathway. Plays a role in the regulation of blood pressure in response to signaling via G protein-coupled receptors and GNAQ. Plays a role in regulating the constriction and relaxation of vascular smooth muscle. Binds EIF2B5 and blocks its activity, thereby inhibiting the translation of mRNA into protein. The sequence is that of Regulator of G-protein signaling 2 (RGS2) from Sus scrofa (Pig).